The sequence spans 203 residues: MKKLAITCALLSGMVVSQVWADAASDLKSRLDKVSSFHASFTQKVTDGSGNAVQDGQGDLWVKRPNLFNWHMTQPDESVLVSDGKTLWFYNPFVEQATATWLKDATSNTPFMLIARNQSSDWQQYNIKQNGDDFVLTPKSGSGNLKQFTINVGRDGTIHQFSAVEQDDQRSSYQLKSQQNGAVDAAKFTFTPPKGVTVDDQRK.

The signal sequence occupies residues 1–21 (MKKLAITCALLSGMVVSQVWA).

Belongs to the LolA family. In terms of assembly, monomer.

Its subcellular location is the periplasm. Functionally, participates in the translocation of lipoproteins from the inner membrane to the outer membrane. Only forms a complex with a lipoprotein if the residue after the N-terminal Cys is not an aspartate (The Asp acts as a targeting signal to indicate that the lipoprotein should stay in the inner membrane). The protein is Outer-membrane lipoprotein carrier protein of Klebsiella pneumoniae subsp. pneumoniae (strain ATCC 700721 / MGH 78578).